The chain runs to 215 residues: Cytochrome b6 (215 aa).

Residues 32–52 form a helical membrane-spanning segment; sequence IFYCLGGITLTCFLVQIATGF. Cys-35 contributes to the heme c binding site. 2 residues coordinate heme b: His-86 and His-100. 3 helical membrane-spanning segments follow: residues 90–110, 116–136, and 186–206; these read ASMMVLVMILHVFRVYLTGGF, LTWVTGVILAVLTVSFGVTGY, and LHTFVLPLLTAVFMLMHFLMI. The heme b site is built by His-187 and His-202.

This sequence belongs to the cytochrome b family. PetB subfamily. In terms of assembly, the 4 large subunits of the cytochrome b6-f complex are cytochrome b6, subunit IV (17 kDa polypeptide, PetD), cytochrome f and the Rieske protein, while the 4 small subunits are PetG, PetL, PetM and PetN. The complex functions as a dimer. The cofactor is heme b. Heme c is required as a cofactor.

The protein localises to the plastid. It localises to the chloroplast thylakoid membrane. In terms of biological role, component of the cytochrome b6-f complex, which mediates electron transfer between photosystem II (PSII) and photosystem I (PSI), cyclic electron flow around PSI, and state transitions. The chain is Cytochrome b6 from Adiantum capillus-veneris (Maidenhair fern).